A 752-amino-acid chain; its full sequence is Zinc finger protein 425 (752 aa).

In terms of domain architecture, KRAB spans 9–80; sequence VTFDDVALYF…EQGCLDKTRR (72 aa). 19 C2H2-type zinc fingers span residues 190-212, 246-268, 274-296, 302-324, 330-352, 358-380, 386-408, 414-436, 442-464, 470-492, 498-520, 526-548, 554-576, 582-604, 610-632, 638-660, 666-688, 694-716, and 722-744; these read YSCYVCRKVFQVRRDLLKHKRSH, FQCSECEKSYFLKGSLVTHQVVH, YPCPECDKTFRYRANLKKHLCLH, FCCGECGRAFVQQCELTEHLRLH, FQCPQCDRCFRLKRGMKVHLTQH, FHCPECGRSFSRKAALKTHQRTH, FSCGECGRKFIYKIKLDEHIRVH, FSCPECNKSFRLKRSLKAHGLQH, FQCPECSRGFFWRNAMRAHQRLH, FPCAECGKRFTRPSKLACHTRVH, FPCGECKKTFSQQSRLTQHLKVH, FSCAECGRSFRRRAHLTEHTRLH, FQCPECDKSFSWKASMKFHQRMH, FACGECDKTYTHQSQLTEHLRLH, YQCPECEKTFRLKGNLKSHLLQH, FSCVMCGKSFTQQYRLTEHIRVH, FQCPECDKSYCIRGSLKVHLYKH, FQCPECGKGFLQKRSLKAHLCLH, and FSCDECGRSFTYVGALKTHIAVH.

This sequence belongs to the krueppel C2H2-type zinc-finger protein family.

It is found in the nucleus. The protein resides in the cytoplasm. Its function is as follows. Acts as a transcriptional repressor. The polypeptide is Zinc finger protein 425 (ZNF425) (Homo sapiens (Human)).